The chain runs to 300 residues: ADP,ATP carrier protein 2 (300 aa).

Solcar repeat units follow at residues 8 to 100, 113 to 203, and 214 to 299; these read VAFI…YKQV, RYFI…ARGM, and VSWA…IKKV. 5 helical membrane passes run 10 to 39, 77 to 101, 112 to 132, 181 to 201, and 213 to 233; these read FIKD…LLLQ, LANV…KQVF, TRYF…SLCF, VSVQ…DTAR, and YVSW…SYPF. ADP-binding residues include Arg82 and Lys94. Arg237 contacts ADP. Residues 237 to 242 are important for transport activity; that stretch reads RRRMMM. Positions 237–242 match the Nucleotide carrier signature motif motif; the sequence is RRRMMM. Residues 276 to 293 form a helical membrane-spanning segment; the sequence is AFSNVLRGTGGAFVLVLY.

It belongs to the mitochondrial carrier (TC 2.A.29) family. In terms of assembly, monomer.

It is found in the mitochondrion inner membrane. It catalyses the reaction ADP(in) + ATP(out) = ADP(out) + ATP(in). Its activity is regulated as follows. The matrix-open state (m-state) is inhibited by the membrane-permeable bongkrekic acid (BKA). The cytoplasmic-open state (c-state) is inhibited by the membrane-impermeable toxic inhibitor carboxyatractyloside (CATR). In terms of biological role, ADP:ATP antiporter that mediates import of ADP into the mitochondrial matrix for ATP synthesis, and export of ATP out to fuel the cell. Cycles between the cytoplasmic-open state (c-state) and the matrix-open state (m-state): operates by the alternating access mechanism with a single substrate-binding site intermittently exposed to either the cytosolic (c-state) or matrix (m-state) side of the inner mitochondrial membrane. This is ADP,ATP carrier protein 2 from Anopheles gambiae (African malaria mosquito).